Reading from the N-terminus, the 318-residue chain is Nuclear egress protein 1 (318 aa).

The CCCH-type zinc-finger motif lies at cysteine 129–histidine 239.

Belongs to the herpesviridae NEC1 protein family. In terms of assembly, forms a heterodimeric viral nuclear egress complex (NEC) with NEC2. Interacts with capsid vertex specific component 2/CVC2; this interaction directs the capsid to the host inner nuclear membrane to initiate budding. Phosphorylated at serine residues in the N-terminus. This phosphorylation regulates the localization within the inner nuclear membrane.

It localises to the host nucleus inner membrane. In terms of biological role, plays an essential role in virion nuclear egress, the first step of virion release from infected cell. Within the host nucleus, NEC1 interacts with the newly formed capsid through the vertexes and directs it to the inner nuclear membrane by associating with NEC2. Induces the budding of the capsid at the inner nuclear membrane as well as its envelopment into the perinuclear space. There, the NEC1/NEC2 complex promotes the fusion of the enveloped capsid with the outer nuclear membrane and the subsequent release of the viral capsid into the cytoplasm where it will reach the secondary budding sites in the host Golgi or trans-Golgi network. This Homo sapiens (Human) protein is Nuclear egress protein 1.